The following is an 874-amino-acid chain: MKSAEIREAFLRFFEEQGHTRVASSSLIPGNDPTLLFTNAGMNQFKDCFLGQEKRAYTRAVSSQKCVRAGGKHNDLENVGYTARHHTFFEMLGNFSFGDYFKRDAITFAWTFLTSDKWLNLPKEKLWVTVYATDDEAYDIWTKEVGVPAERMVRIGDNKGAPYASDNFWTMGDTGPCGPCTEIFYDHGADIWGGPPGSPEEDGDRYIEIWNNVFMQFNRTADGVLHPLPAPSVDTGMGLERISAVLQHVHSNYEIDLFQSLLDAAAKAIGCTNDAQASLKVVADHIRSCGFLIADGVLPSNEGRGYVLRRIIRRACRHGNKLGAKGSFFYQIVAALVAEMGEAFPELKSQQAHIERVLKAEEEQFAKTLEQGLKILEQDLAELKGSVVPGDVVFKLYDTYGFPMDLTGDIARERNLTLDEEGFEREMEAQRVRARSASSFGMDYNSLVKVDVATEFTGYHATSGSAKVVALYKEGQSVDMLSEGEEGVVVLDQTPFYAESGGQIGDCGYLQAGNARFDVRDTTKTGGAFLHHGVLAKGSLTVGAPVETQVDAQVRHATSLNHSATHLLHAALRQVLGEHVQQKGSLVDSQRLRFDFSHFEAIKPEQIKALEDIVNAEIRKNTPVETEETDIDTAKKKGAMALFGEKYGDSVRVLSMGGDFSVELCGGIHANRTGDIGLLKITSEGGVASGVRRIEAVTGAAALAYLNAAEEQLKEAATLVKGSRDNLIDKLSAVLERNRLLEKQLEQLQAKAASAAGDDLSAQAADVKGVKVLAARLDGQDGKALLALVDQLKNKLGRAVILLGSVHEEKVVLVAGVTKDLTGQLKAGDLMKQAAAAVGGKGGGRPDMAQGGGVDAAALDAALALTVPFVEQGI.

Positions 562, 566, 665, and 669 each coordinate Zn(2+).

It belongs to the class-II aminoacyl-tRNA synthetase family. Zn(2+) serves as cofactor.

It is found in the cytoplasm. The enzyme catalyses tRNA(Ala) + L-alanine + ATP = L-alanyl-tRNA(Ala) + AMP + diphosphate. Its function is as follows. Catalyzes the attachment of alanine to tRNA(Ala) in a two-step reaction: alanine is first activated by ATP to form Ala-AMP and then transferred to the acceptor end of tRNA(Ala). Also edits incorrectly charged Ser-tRNA(Ala) and Gly-tRNA(Ala) via its editing domain. This Pseudomonas fluorescens (strain ATCC BAA-477 / NRRL B-23932 / Pf-5) protein is Alanine--tRNA ligase.